A 223-amino-acid chain; its full sequence is Thiamine-phosphate synthase (223 aa).

Residues 42-46 (QLRDK) and Asn83 contribute to the 4-amino-2-methyl-5-(diphosphooxymethyl)pyrimidine site. Mg(2+) is bound by residues Asp84 and Asp103. Ser122 contacts 4-amino-2-methyl-5-(diphosphooxymethyl)pyrimidine. 148–150 (TPT) serves as a coordination point for 2-[(2R,5Z)-2-carboxy-4-methylthiazol-5(2H)-ylidene]ethyl phosphate. Lys151 provides a ligand contact to 4-amino-2-methyl-5-(diphosphooxymethyl)pyrimidine. Gly179 lines the 2-[(2R,5Z)-2-carboxy-4-methylthiazol-5(2H)-ylidene]ethyl phosphate pocket.

The protein belongs to the thiamine-phosphate synthase family. Requires Mg(2+) as cofactor.

It carries out the reaction 2-[(2R,5Z)-2-carboxy-4-methylthiazol-5(2H)-ylidene]ethyl phosphate + 4-amino-2-methyl-5-(diphosphooxymethyl)pyrimidine + 2 H(+) = thiamine phosphate + CO2 + diphosphate. It catalyses the reaction 2-(2-carboxy-4-methylthiazol-5-yl)ethyl phosphate + 4-amino-2-methyl-5-(diphosphooxymethyl)pyrimidine + 2 H(+) = thiamine phosphate + CO2 + diphosphate. The catalysed reaction is 4-methyl-5-(2-phosphooxyethyl)-thiazole + 4-amino-2-methyl-5-(diphosphooxymethyl)pyrimidine + H(+) = thiamine phosphate + diphosphate. Its pathway is cofactor biosynthesis; thiamine diphosphate biosynthesis; thiamine phosphate from 4-amino-2-methyl-5-diphosphomethylpyrimidine and 4-methyl-5-(2-phosphoethyl)-thiazole: step 1/1. Functionally, condenses 4-methyl-5-(beta-hydroxyethyl)thiazole monophosphate (THZ-P) and 2-methyl-4-amino-5-hydroxymethyl pyrimidine pyrophosphate (HMP-PP) to form thiamine monophosphate (TMP). The polypeptide is Thiamine-phosphate synthase (Mycobacterium avium (strain 104)).